A 42-amino-acid polypeptide reads, in one-letter code: Delta-hexatoxin-Hv1a (42 aa).

4 disulfides stabilise this stretch: Cys-1-Cys-15, Cys-8-Cys-20, Cys-14-Cys-31, and Cys-16-Cys-42.

This sequence belongs to the neurotoxin 06 (delta-actx) family. Expressed by the venom gland.

The protein resides in the secreted. In terms of biological role, inhibits tetrodotoxin-sensitive voltage-gated sodium channels (Nav) by binding to site 3. Slows the inactivation, and causes a prolongation of action potential duration resulting in repetitive firing in autonomic and motor nerve fibers. Does not depolarize the resting potential. Does not affect tetrodotoxin-resistant sodium channels. This lethal neurotoxin is active on both insect and mammalian voltage-gated sodium channels. Pan-neuronal expression in Drosophila is lethal but flies engineered to express the toxin only in pacemaker neurons have profound defects in circadian rhythm but a normal lifespan. This Hadronyche versuta (Blue mountains funnel-web spider) protein is Delta-hexatoxin-Hv1a.